The chain runs to 87 residues: Small ribosomal subunit protein uS15 (87 aa).

Residues 1–19 (MDKAKKQELMAKHARHEGD) show a composition bias toward basic and acidic residues. The tract at residues 1–23 (MDKAKKQELMAKHARHEGDTGSP) is disordered.

It belongs to the universal ribosomal protein uS15 family. In terms of assembly, part of the 30S ribosomal subunit. Forms a bridge to the 50S subunit in the 70S ribosome, contacting the 23S rRNA.

Functionally, one of the primary rRNA binding proteins, it binds directly to 16S rRNA where it helps nucleate assembly of the platform of the 30S subunit by binding and bridging several RNA helices of the 16S rRNA. In terms of biological role, forms an intersubunit bridge (bridge B4) with the 23S rRNA of the 50S subunit in the ribosome. The sequence is that of Small ribosomal subunit protein uS15 from Clostridium botulinum (strain Loch Maree / Type A3).